Reading from the N-terminus, the 474-residue chain is 6-phospho-beta-glucosidase AscB (474 aa).

Glu180 (proton donor) is an active-site residue. Residue Glu372 is the Nucleophile of the active site.

This sequence belongs to the glycosyl hydrolase 1 family.

It carries out the reaction 6-phospho-beta-D-glucosyl-(1-&gt;4)-D-glucose + H2O = D-glucose 6-phosphate + D-glucose. Can hydrolyze salicin, cellobiose, and probably arbutin. In Escherichia coli (strain K12), this protein is 6-phospho-beta-glucosidase AscB (ascB).